A 488-amino-acid polypeptide reads, in one-letter code: Transmembrane protein 39A (488 aa).

N-linked (GlcNAc...) asparagine glycosylation is found at asparagine 31 and asparagine 39. 8 helical membrane-spanning segments follow: residues 72–92, 110–130, 154–174, 182–202, 287–307, 319–339, 420–440, and 446–466; these read SLLF…IQYI, TSLN…VMLA, VLIS…CWTL, SVLN…LCCF, EVLF…LCFV, CEHL…QLLP, LLNL…YSLL, and NHTL…FKLL.

Belongs to the TMEM39 family. Interacts with SACM1L, SEC23A and SEC24A.

It localises to the endoplasmic reticulum membrane. In terms of biological role, regulates autophagy by controlling the spatial distribution and levels of the intracellular phosphatidylinositol 4-phosphate (PtdIns(4)P) pools. Modulates (PtdIns(4)P) levels by regulating the ER-to-Golgi trafficking of the phosphatidylinositide phosphatase SACM1L. This chain is Transmembrane protein 39A (TMEM39A), found in Bos taurus (Bovine).